A 573-amino-acid chain; its full sequence is Potassium-transporting ATPase potassium-binding subunit (573 aa).

10 helical membrane-spanning segments follow: residues 6-26 (ILFALFIVTIALITKPLGSYI), 66-86 (FFSLVSFSVMAFIFVLVILLL), 135-155 (ALAVQNFVSAAVGLCVAIALI), 177-197 (IFWILLPISIVIAIVYIFQGV), 257-277 (IQMVSIFAIAAALTYTFGKWV), 283-303 (GWLIFGVMLVLFIISLVVMTI), 382-402 (IFGGVGAGFYGFFMFLMLAVF), 428-448 (MFALLISPCCVLVFTGLAAVI), 493-513 (ITIALSMLIGRFGVIFAVIML), and 537-557 (FIFAILVFFTILLIGGLTIFP).

The protein belongs to the KdpA family. In terms of assembly, the system is composed of three essential subunits: KdpA, KdpB and KdpC.

The protein localises to the cell inner membrane. Part of the high-affinity ATP-driven potassium transport (or Kdp) system, which catalyzes the hydrolysis of ATP coupled with the electrogenic transport of potassium into the cytoplasm. This subunit binds the periplasmic potassium ions and delivers the ions to the membrane domain of KdpB through an intramembrane tunnel. In Francisella tularensis subsp. novicida (strain U112), this protein is Potassium-transporting ATPase potassium-binding subunit.